A 209-amino-acid chain; its full sequence is MEQQKIPQATAKRLPLYYRFIQNLSLSGKQRVSSAELSEAVKVDSATIRRDFSYFGALGKKGYGYNVNYLLSFFRETLDQDDITRVALIGVGNLGTAFLHYNFTKNNNTKIEMAFDVSEEKVGTEIGGIPVYHLDELEERLSTDIQVAILTVPATVAQSVADRLAETNVHGILNFTPARLNVSESIRIHHIDLAVELQTLVYFLKNYPQ.

Residues 16-55 (LYYRFIQNLSLSGKQRVSSAELSEAVKVDSATIRRDFSYF) constitute a DNA-binding region (H-T-H motif). 90–95 (GVGNLG) contributes to the NAD(+) binding site.

Belongs to the transcriptional regulatory Rex family. As to quaternary structure, homodimer.

The protein localises to the cytoplasm. Modulates transcription in response to changes in cellular NADH/NAD(+) redox state. The polypeptide is Redox-sensing transcriptional repressor Rex (Bacillus thuringiensis (strain Al Hakam)).